The primary structure comprises 439 residues: 3-phosphoshikimate 1-carboxyvinyltransferase (439 aa).

The 3-phosphoshikimate site is built by Lys27, Ser28, and Arg32. A phosphoenolpyruvate-binding site is contributed by Lys27. 2 residues coordinate phosphoenolpyruvate: Gly101 and Arg130. Residues Ser175, Gln177, Asp326, and Lys353 each contribute to the 3-phosphoshikimate site. Phosphoenolpyruvate is bound at residue Gln177. Asp326 (proton acceptor) is an active-site residue. Residues Arg357 and Arg399 each contribute to the phosphoenolpyruvate site.

The protein belongs to the EPSP synthase family. Monomer.

Its subcellular location is the cytoplasm. The catalysed reaction is 3-phosphoshikimate + phosphoenolpyruvate = 5-O-(1-carboxyvinyl)-3-phosphoshikimate + phosphate. The protein operates within metabolic intermediate biosynthesis; chorismate biosynthesis; chorismate from D-erythrose 4-phosphate and phosphoenolpyruvate: step 6/7. In terms of biological role, catalyzes the transfer of the enolpyruvyl moiety of phosphoenolpyruvate (PEP) to the 5-hydroxyl of shikimate-3-phosphate (S3P) to produce enolpyruvyl shikimate-3-phosphate and inorganic phosphate. The protein is 3-phosphoshikimate 1-carboxyvinyltransferase of Synechococcus sp. (strain WH7803).